A 166-amino-acid polypeptide reads, in one-letter code: NAD(P)H-quinone oxidoreductase subunit I, chloroplastic (166 aa).

2 consecutive 4Fe-4S ferredoxin-type domains span residues 55–84 (GRIH…VDWK) and 95–124 (LNYS…MTEE). Residues cysteine 64, cysteine 67, cysteine 70, cysteine 74, cysteine 104, cysteine 107, cysteine 110, and cysteine 114 each contribute to the [4Fe-4S] cluster site.

It belongs to the complex I 23 kDa subunit family. As to quaternary structure, NDH is composed of at least 16 different subunits, 5 of which are encoded in the nucleus. The cofactor is [4Fe-4S] cluster.

The protein localises to the plastid. The protein resides in the chloroplast thylakoid membrane. It catalyses the reaction a plastoquinone + NADH + (n+1) H(+)(in) = a plastoquinol + NAD(+) + n H(+)(out). It carries out the reaction a plastoquinone + NADPH + (n+1) H(+)(in) = a plastoquinol + NADP(+) + n H(+)(out). Its function is as follows. NDH shuttles electrons from NAD(P)H:plastoquinone, via FMN and iron-sulfur (Fe-S) centers, to quinones in the photosynthetic chain and possibly in a chloroplast respiratory chain. The immediate electron acceptor for the enzyme in this species is believed to be plastoquinone. Couples the redox reaction to proton translocation, and thus conserves the redox energy in a proton gradient. In Lactuca sativa (Garden lettuce), this protein is NAD(P)H-quinone oxidoreductase subunit I, chloroplastic.